The sequence spans 2282 residues: Protein Ycf2 (2282 aa).

An ATP-binding site is contributed by 1635–1642 (GSIGTGRS).

This sequence belongs to the Ycf2 family.

The protein resides in the plastid. It localises to the chloroplast stroma. Its function is as follows. Probable ATPase of unknown function. Its presence in a non-photosynthetic plant (Epifagus virginiana) and experiments in tobacco indicate that it has an essential function which is probably not related to photosynthesis. This is Protein Ycf2 from Populus alba (White poplar).